The chain runs to 302 residues: Sulfate adenylyltransferase subunit 2 (302 aa).

The tract at residues 280–302 (RQGRAIDHDQSGSMELKKRQGYF) is disordered.

This sequence belongs to the PAPS reductase family. CysD subfamily. In terms of assembly, heterodimer composed of CysD, the smaller subunit, and CysN.

It catalyses the reaction sulfate + ATP + H(+) = adenosine 5'-phosphosulfate + diphosphate. The protein operates within sulfur metabolism; hydrogen sulfide biosynthesis; sulfite from sulfate: step 1/3. In terms of biological role, with CysN forms the ATP sulfurylase (ATPS) that catalyzes the adenylation of sulfate producing adenosine 5'-phosphosulfate (APS) and diphosphate, the first enzymatic step in sulfur assimilation pathway. APS synthesis involves the formation of a high-energy phosphoric-sulfuric acid anhydride bond driven by GTP hydrolysis by CysN coupled to ATP hydrolysis by CysD. The polypeptide is Sulfate adenylyltransferase subunit 2 (Vibrio vulnificus (strain CMCP6)).